Consider the following 459-residue polypeptide: Putrescine aminotransferase (459 aa).

Residues 150–151 (GT) and Q274 contribute to the pyridoxal 5'-phosphate site. Residue K300 is modified to N6-(pyridoxal phosphate)lysine. Residue T332 participates in pyridoxal 5'-phosphate binding.

Belongs to the class-III pyridoxal-phosphate-dependent aminotransferase family. Putrescine aminotransferase subfamily. It depends on pyridoxal 5'-phosphate as a cofactor.

The enzyme catalyses an alkane-alpha,omega-diamine + 2-oxoglutarate = an omega-aminoaldehyde + L-glutamate. It catalyses the reaction putrescine + 2-oxoglutarate = 1-pyrroline + L-glutamate + H2O. The catalysed reaction is cadaverine + 2-oxoglutarate = 5-aminopentanal + L-glutamate. It participates in amine and polyamine degradation; putrescine degradation; 4-aminobutanal from putrescine (transaminase route): step 1/1. Catalyzes the aminotransferase reaction from putrescine to 2-oxoglutarate, leading to glutamate and 4-aminobutanal, which spontaneously cyclizes to form 1-pyrroline. This is the first step in one of two pathways for putrescine degradation, where putrescine is converted into 4-aminobutanoate (gamma-aminobutyrate or GABA) via 4-aminobutanal. Also functions as a cadaverine transaminase in a a L-lysine degradation pathway to succinate that proceeds via cadaverine, glutarate and L-2-hydroxyglutarate. The chain is Putrescine aminotransferase from Klebsiella pneumoniae subsp. pneumoniae (strain ATCC 700721 / MGH 78578).